The primary structure comprises 335 residues: Succinylglutamate desuccinylase (335 aa).

3 residues coordinate Zn(2+): His59, Glu62, and His151. Glu215 is a catalytic residue.

The protein belongs to the AspA/AstE family. Succinylglutamate desuccinylase subfamily. Requires Zn(2+) as cofactor.

The catalysed reaction is N-succinyl-L-glutamate + H2O = L-glutamate + succinate. The protein operates within amino-acid degradation; L-arginine degradation via AST pathway; L-glutamate and succinate from L-arginine: step 5/5. Functionally, transforms N(2)-succinylglutamate into succinate and glutamate. This Pseudomonas putida (strain ATCC 47054 / DSM 6125 / CFBP 8728 / NCIMB 11950 / KT2440) protein is Succinylglutamate desuccinylase.